Here is a 188-residue protein sequence, read N- to C-terminus: Sec-independent protein translocase protein TatB (188 aa).

The helical transmembrane segment at Met-1–Gly-21 threads the bilayer. A disordered region spans residues Leu-147–Ser-188. Residues Asp-160 to Ala-170 are compositionally biased toward low complexity.

This sequence belongs to the TatB family. In terms of assembly, the Tat system comprises two distinct complexes: a TatABC complex, containing multiple copies of TatA, TatB and TatC subunits, and a separate TatA complex, containing only TatA subunits. Substrates initially bind to the TatABC complex, which probably triggers association of the separate TatA complex to form the active translocon.

Its subcellular location is the cell inner membrane. Functionally, part of the twin-arginine translocation (Tat) system that transports large folded proteins containing a characteristic twin-arginine motif in their signal peptide across membranes. Together with TatC, TatB is part of a receptor directly interacting with Tat signal peptides. TatB may form an oligomeric binding site that transiently accommodates folded Tat precursor proteins before their translocation. This is Sec-independent protein translocase protein TatB from Rhodopseudomonas palustris (strain HaA2).